A 29-amino-acid chain; its full sequence is Photosystem I reaction center subunit XII (29 aa).

A helical transmembrane segment spans residues 7 to 24; that stretch reads FVALLLALVPAVLAYRLG.

This sequence belongs to the PsaM family.

The protein localises to the cellular thylakoid membrane. This Synechococcus sp. (strain ATCC 27144 / PCC 6301 / SAUG 1402/1) (Anacystis nidulans) protein is Photosystem I reaction center subunit XII.